A 401-amino-acid chain; its full sequence is Dual specificity mitogen-activated protein kinase kinase 2 (401 aa).

Met-1 carries the post-translational modification N-acetylmethionine. A Phosphoserine modification is found at Ser-23. Positions 72-370 (FERISELGAG…LKLLMNHAFI (299 aa)) constitute a Protein kinase domain. ATP is bound by residues 78–86 (LGAGNGGVV) and Lys-101. The active-site Proton acceptor is Asp-194. Phosphoserine; by RAF occurs at positions 222 and 226. Positions 282 to 310 (PVVDGADGEPHSVSPRPRPPGRPISVGHG) are disordered. 3 positions are modified to phosphoserine: Ser-293, Ser-295, and Ser-306. 2 positions are modified to phosphothreonine: Thr-395 and Thr-397.

Belongs to the protein kinase superfamily. STE Ser/Thr protein kinase family. MAP kinase kinase subfamily. In terms of assembly, interacts with MORG1. Interacts with SGK1. Interacts with KSR1. Interacts with KSR1 and BRAF; the interaction with KSR1 mediates KSR1-BRAF dimerization. Interacts with GLS. Requires Mg(2+) as cofactor. In terms of processing, phosphorylation on Ser/Thr by MAP kinase kinase kinases (RAF or MEKK1) positively regulates the kinase activity. Phosphorylated by MAP2K1/MEK1. Low levels of autophosphorylation have been observed. In terms of tissue distribution, expressed in adult intestine, kidney, liver, lung, pancreas, spleen, thymus, and at high levels in the neonatal brain. Lower expression is found in adult brain and heart.

The protein localises to the cytoplasm. Its subcellular location is the membrane. It catalyses the reaction L-seryl-[protein] + ATP = O-phospho-L-seryl-[protein] + ADP + H(+). The enzyme catalyses L-threonyl-[protein] + ATP = O-phospho-L-threonyl-[protein] + ADP + H(+). It carries out the reaction L-tyrosyl-[protein] + ATP = O-phospho-L-tyrosyl-[protein] + ADP + H(+). With respect to regulation, inhibited by serine/threonine phosphatase 2A. Functionally, catalyzes the concomitant phosphorylation of a threonine and a tyrosine residue in a Thr-Glu-Tyr sequence located in MAP kinases. Activates the ERK1 and ERK2 MAP kinases. Activates BRAF in a KSR1 or KSR2-dependent manner; by binding to KSR1 or KSR2 releases the inhibitory intramolecular interaction between KSR1 or KSR2 protein kinase and N-terminal domains which promotes KSR1 or KSR2-BRAF dimerization and BRAF activation. This is Dual specificity mitogen-activated protein kinase kinase 2 (Map2k2) from Mus musculus (Mouse).